The primary structure comprises 436 residues: Protein TolB homolog (436 aa).

The signal sequence occupies residues 1 to 27; it reads MRHSIRLTAALLLAFIACFSFPLSAMA.

This sequence belongs to the TolB family.

Its subcellular location is the periplasm. The polypeptide is Protein TolB homolog (Chlorobium luteolum (strain DSM 273 / BCRC 81028 / 2530) (Pelodictyon luteolum)).